The sequence spans 303 residues: Glycine--tRNA ligase alpha subunit (303 aa).

The protein belongs to the class-II aminoacyl-tRNA synthetase family. As to quaternary structure, tetramer of two alpha and two beta subunits.

The protein resides in the cytoplasm. It carries out the reaction tRNA(Gly) + glycine + ATP = glycyl-tRNA(Gly) + AMP + diphosphate. In Erwinia tasmaniensis (strain DSM 17950 / CFBP 7177 / CIP 109463 / NCPPB 4357 / Et1/99), this protein is Glycine--tRNA ligase alpha subunit.